The sequence spans 75 residues: Dermaseptin-S11 (75 aa).

Positions 1 to 22 (MAFLKKSLFLVLFLGMVSLSIC) are cleaved as a signal peptide. Residues 23–45 (EEEKRENEDEEEQEDDEQSEEKR) constitute a propeptide that is removed on maturation. Residues 25–44 (EKRENEDEEEQEDDEQSEEK) form a disordered region. Positions 30–41 (EDEEEQEDDEQS) are enriched in acidic residues.

Belongs to the frog skin active peptide (FSAP) family. Dermaseptin subfamily. Expressed by the skin glands.

The protein localises to the secreted. It localises to the target cell membrane. Functionally, antimicrobial peptide with activity against Gram-positive and Gram-negative bacteria, and fungi. Has hemolytic activity. This chain is Dermaseptin-S11, found in Phyllomedusa sauvagei (Sauvage's leaf frog).